The chain runs to 154 residues: 3-hydroxyacyl-[acyl-carrier-protein] dehydratase FabZ (154 aa).

Residue His-57 is part of the active site.

Belongs to the thioester dehydratase family. FabZ subfamily.

Its subcellular location is the cytoplasm. It carries out the reaction a (3R)-hydroxyacyl-[ACP] = a (2E)-enoyl-[ACP] + H2O. Involved in unsaturated fatty acids biosynthesis. Catalyzes the dehydration of short chain beta-hydroxyacyl-ACPs and long chain saturated and unsaturated beta-hydroxyacyl-ACPs. This chain is 3-hydroxyacyl-[acyl-carrier-protein] dehydratase FabZ, found in Sinorhizobium fredii (strain NBRC 101917 / NGR234).